A 235-amino-acid chain; its full sequence is Hydroxyacylglutathione hydrolase (235 aa).

Zn(2+) contacts are provided by His-53, His-55, Asp-57, His-58, His-109, Asp-127, and His-165.

The protein belongs to the metallo-beta-lactamase superfamily. Glyoxalase II family. In terms of assembly, monomer. Requires Zn(2+) as cofactor.

The enzyme catalyses an S-(2-hydroxyacyl)glutathione + H2O = a 2-hydroxy carboxylate + glutathione + H(+). The protein operates within secondary metabolite metabolism; methylglyoxal degradation; (R)-lactate from methylglyoxal: step 2/2. In terms of biological role, thiolesterase that catalyzes the hydrolysis of S-D-lactoyl-glutathione to form glutathione and D-lactic acid. This is Hydroxyacylglutathione hydrolase from Glaesserella parasuis serovar 5 (strain SH0165) (Haemophilus parasuis).